We begin with the raw amino-acid sequence, 148 residues long: Nucleoside diphosphate kinase 1 (148 aa).

ATP is bound by residues K9, F57, R85, T91, R102, and N112. H115 functions as the Pros-phosphohistidine intermediate in the catalytic mechanism.

Belongs to the NDK family. The cofactor is Mg(2+).

It carries out the reaction a 2'-deoxyribonucleoside 5'-diphosphate + ATP = a 2'-deoxyribonucleoside 5'-triphosphate + ADP. The catalysed reaction is a ribonucleoside 5'-diphosphate + ATP = a ribonucleoside 5'-triphosphate + ADP. Its function is as follows. Major role in the synthesis of nucleoside triphosphates other than ATP. The ATP gamma phosphate is transferred to the NDP beta phosphate via a ping-pong mechanism, using a phosphorylated active-site intermediate. In Mesembryanthemum crystallinum (Common ice plant), this protein is Nucleoside diphosphate kinase 1 (NDKP1).